Here is a 447-residue protein sequence, read N- to C-terminus: MLHRYLPMTEEDKKEMLQTIGVQTIDELFSDIPESVRFKGDLKIKEAKSESELLKELSQMASKNANLKEYASFLGAGVYDHYAPVIVDHVISRSEFYTAYTPYQPEISQGELQAIFEFQTMICELTGMDVANSSMYDGGTALAEAAMLAAGHTRKKKILVSSAVHPESRAVLETYAKGQHLEVVEINHKDGVTDLDVLQSEVDDTVACVIVQYPNFFGQVEKLADIEKIVHQQKSLFIVSSNPLSLGALTPPGKFGADIVIGDAQPFGIPTQFGGPHCGYFATTKAFMRKIPGRLVGQTVDSDGKRGFVLTLQAREQHIRRDKATSNICSNQALNALAASVAMTALGKQGVKEMARQNISKAQYAKRQFEAKGFTVTFAGPFFNEFVVDCKRPVKEVNDALLQKNIIGGYDLGRDYKEHENHMLVAVTELRTKEEIDTLVNEMGAIQ.

It belongs to the GcvP family. N-terminal subunit subfamily. In terms of assembly, the glycine cleavage system is composed of four proteins: P, T, L and H. In this organism, the P 'protein' is a heterodimer of two subunits.

It carries out the reaction N(6)-[(R)-lipoyl]-L-lysyl-[glycine-cleavage complex H protein] + glycine + H(+) = N(6)-[(R)-S(8)-aminomethyldihydrolipoyl]-L-lysyl-[glycine-cleavage complex H protein] + CO2. Functionally, the glycine cleavage system catalyzes the degradation of glycine. The P protein binds the alpha-amino group of glycine through its pyridoxal phosphate cofactor; CO(2) is released and the remaining methylamine moiety is then transferred to the lipoamide cofactor of the H protein. The chain is Probable glycine dehydrogenase (decarboxylating) subunit 1 from Bacillus cereus (strain ATCC 10987 / NRS 248).